The sequence spans 119 residues: Large ribosomal subunit protein bL19 (119 aa).

This sequence belongs to the bacterial ribosomal protein bL19 family.

Functionally, this protein is located at the 30S-50S ribosomal subunit interface and may play a role in the structure and function of the aminoacyl-tRNA binding site. This is Large ribosomal subunit protein bL19 from Idiomarina loihiensis (strain ATCC BAA-735 / DSM 15497 / L2-TR).